The sequence spans 476 residues: Bifunctional protein HldE (476 aa).

The segment at 1 to 319 (MKLTLPDYDQ…EAIYGSQDSG (319 aa)) is ribokinase. Residue 195-198 (NLSE) participates in ATP binding. The active site involves D264. The tract at residues 344–476 (MTNGCFDILH…IIEAIRGGKG (133 aa)) is cytidylyltransferase.

The protein in the N-terminal section; belongs to the carbohydrate kinase PfkB family. It in the C-terminal section; belongs to the cytidylyltransferase family. Homodimer.

It carries out the reaction D-glycero-beta-D-manno-heptose 7-phosphate + ATP = D-glycero-beta-D-manno-heptose 1,7-bisphosphate + ADP + H(+). The enzyme catalyses D-glycero-beta-D-manno-heptose 1-phosphate + ATP + H(+) = ADP-D-glycero-beta-D-manno-heptose + diphosphate. It functions in the pathway nucleotide-sugar biosynthesis; ADP-L-glycero-beta-D-manno-heptose biosynthesis; ADP-L-glycero-beta-D-manno-heptose from D-glycero-beta-D-manno-heptose 7-phosphate: step 1/4. Its pathway is nucleotide-sugar biosynthesis; ADP-L-glycero-beta-D-manno-heptose biosynthesis; ADP-L-glycero-beta-D-manno-heptose from D-glycero-beta-D-manno-heptose 7-phosphate: step 3/4. Catalyzes the phosphorylation of D-glycero-D-manno-heptose 7-phosphate at the C-1 position to selectively form D-glycero-beta-D-manno-heptose-1,7-bisphosphate. In terms of biological role, catalyzes the ADP transfer from ATP to D-glycero-beta-D-manno-heptose 1-phosphate, yielding ADP-D-glycero-beta-D-manno-heptose. In Photobacterium profundum (strain SS9), this protein is Bifunctional protein HldE.